We begin with the raw amino-acid sequence, 536 residues long: MTKFIFVTGGVVSSLGKGITASSLGRLLKDRGLNVTIQKFDPYLNVDPGTMSPYQHGEVFVTDDGAETDLDLGHYERFIDINLNKFSNVTAGKVYSHVLKKERRGDYLGGTVQVIPHITNEIKERLLLAGESTNADVVITEIGGTTGDIESLPFIEAIRQIRSDLGRENVMYVHCTLLPYIKAAGEMKTKPTQHSVKELRGLGIQPDLIVVRTEYEMTQDLKDKIALFCDINKESVIECRDADSLYEIPLQLSQQNMDDIVIKRLQLNAKYETQLDEWKQLLDIVNNLDGKITIGLVGKYVSLQDAYLSVVESLKHAGYPFAKDIDIRWIDSSEVTDENAAEYLADVDGILVPGGFGFRASEGKISAIKYARENNVPFFGICLGMQLATVEFSRNVLGLEGAHSAELDPATPYPIIDLLPEQKDIEDLGGTLRLGLYPCSIKEGTLAQDVYGKAEIEERHRHRYEFNNDYREQLEANGMVISGTSPDGRLVEMVEIPTNDFFIACQFHPEFLSRPNRPHPIFKSFIEASLKYQQNK.

Positions 1 to 267 (MTKFIFVTGG…DDIVIKRLQL (267 aa)) are amidoligase domain. A CTP-binding site is contributed by Ser13. UTP is bound at residue Ser13. An ATP-binding site is contributed by 14-19 (SLGKGI). Residue Tyr54 coordinates L-glutamine. Position 71 (Asp71) interacts with ATP. Residues Asp71 and Glu141 each contribute to the Mg(2+) site. Residues 148–150 (DIE), 188–193 (KTKPTQ), and Lys224 each bind CTP. UTP is bound by residues 188 to 193 (KTKPTQ) and Lys224. 240 to 242 (RDA) contacts ATP. The Glutamine amidotransferase type-1 domain occupies 293 to 535 (TIGLVGKYVS…IEASLKYQQN (243 aa)). Gly355 provides a ligand contact to L-glutamine. Cys382 acts as the Nucleophile; for glutamine hydrolysis in catalysis. L-glutamine-binding positions include 383–386 (LGMQ), Glu406, and Arg463. Active-site residues include His508 and Glu510.

It belongs to the CTP synthase family. As to quaternary structure, homotetramer.

It carries out the reaction UTP + L-glutamine + ATP + H2O = CTP + L-glutamate + ADP + phosphate + 2 H(+). The catalysed reaction is L-glutamine + H2O = L-glutamate + NH4(+). The enzyme catalyses UTP + NH4(+) + ATP = CTP + ADP + phosphate + 2 H(+). Its pathway is pyrimidine metabolism; CTP biosynthesis via de novo pathway; CTP from UDP: step 2/2. Its activity is regulated as follows. Allosterically activated by GTP, when glutamine is the substrate; GTP has no effect on the reaction when ammonia is the substrate. The allosteric effector GTP functions by stabilizing the protein conformation that binds the tetrahedral intermediate(s) formed during glutamine hydrolysis. Inhibited by the product CTP, via allosteric rather than competitive inhibition. In terms of biological role, catalyzes the ATP-dependent amination of UTP to CTP with either L-glutamine or ammonia as the source of nitrogen. Regulates intracellular CTP levels through interactions with the four ribonucleotide triphosphates. The polypeptide is CTP synthase (Staphylococcus aureus (strain COL)).